We begin with the raw amino-acid sequence, 376 residues long: Alcohol dehydrogenase class-3 (376 aa).

Zn(2+) is bound by residues C47, H69, C99, C102, C105, C113, and C176.

It belongs to the zinc-containing alcohol dehydrogenase family. Class-III subfamily. Homodimer. Zn(2+) is required as a cofactor. In terms of tissue distribution, expressed in the skeletal muscle, heart, gill filaments and liver, with highest levels in the kidney.

Its subcellular location is the cytoplasm. The catalysed reaction is a primary alcohol + NAD(+) = an aldehyde + NADH + H(+). It carries out the reaction a secondary alcohol + NAD(+) = a ketone + NADH + H(+). The enzyme catalyses S-(hydroxymethyl)glutathione + NADP(+) = S-formylglutathione + NADPH + H(+). It catalyses the reaction S-(hydroxymethyl)glutathione + NAD(+) = S-formylglutathione + NADH + H(+). The catalysed reaction is S-nitrosoglutathione + NADH + H(+) = S-(hydroxysulfenamide)glutathione + NAD(+). Its function is as follows. Class-III ADH is remarkably ineffective in oxidizing ethanol, but it readily catalyzes the oxidation of long-chain primary alcohols and the oxidation of S-(hydroxymethyl) glutathione. Also acts as a S-nitroso-glutathione reductase by catalyzing the NADH-dependent reduction of S-nitrosoglutathione, thereby regulating protein S-nitrosylation. This chain is Alcohol dehydrogenase class-3, found in Sparus aurata (Gilthead sea bream).